Reading from the N-terminus, the 529-residue chain is Peptide chain release factor 3 (529 aa).

Residues 11-280 (AKRRTFAIIS…GLVEWAPAPM (270 aa)) enclose the tr-type G domain. Residues 20 to 27 (SHPDAGKT), 88 to 92 (DTPGH), and 142 to 145 (NKLD) each bind GTP.

It belongs to the TRAFAC class translation factor GTPase superfamily. Classic translation factor GTPase family. PrfC subfamily.

It localises to the cytoplasm. Increases the formation of ribosomal termination complexes and stimulates activities of RF-1 and RF-2. It binds guanine nucleotides and has strong preference for UGA stop codons. It may interact directly with the ribosome. The stimulation of RF-1 and RF-2 is significantly reduced by GTP and GDP, but not by GMP. This is Peptide chain release factor 3 from Klebsiella pneumoniae (strain 342).